A 388-amino-acid polypeptide reads, in one-letter code: Deoxyuridine 5'-triphosphate nucleotidohydrolase (388 aa).

Residues glutamate 77–glutamate 88 show a composition bias toward basic and acidic residues. Disordered stretches follow at residues glutamate 77 to proline 96 and threonine 336 to proline 388. A compositionally biased stretch (acidic residues) spans valine 351–lysine 363.

It belongs to the dUTPase family. Requires Mg(2+) as cofactor.

It localises to the virion. The enzyme catalyses dUTP + H2O = dUMP + diphosphate + H(+). It functions in the pathway pyrimidine metabolism; dUMP biosynthesis; dUMP from dCTP (dUTP route): step 2/2. In terms of biological role, involved in nucleotide metabolism: produces dUMP, the immediate precursor of thymidine nucleotides and decreases the intracellular concentration of dUTP to avoid uracil incorporation into viral DNA. The polypeptide is Deoxyuridine 5'-triphosphate nucleotidohydrolase (Human cytomegalovirus (strain AD169) (HHV-5)).